Here is a 294-residue protein sequence, read N- to C-terminus: MMIHPQYDPVALALGPIEIHWYGLMYLLAFATAYGLAWYRSSKRDNWTTDMVSDLVFYGALGVILGGRIGYVLFYQFGELVQNPAYLLKVWEGGMSFHGGFIGVMLGMWFFARKYKKTAFQVFDFIVPCVPTGLLFGRIGNYINGELWGRVSDGGYNWLTYFPQAAAFDMEQLQSNPQLQELIIEVNGQYVLPRHPSQLYEAFAEGLLLFIFLWWYSSKPRPRMAASAVFLLGYGISRFIIEFFRQPDVDQGFILLGWMTKGQLLSAPMIIAGLIMLIYAYKRGIYDWGKQAAY.

7 helical membrane passes run 10 to 30 (VALA…LLAF), 55 to 75 (LVFY…VLFY), 91 to 111 (WEGG…MWFF), 119 to 139 (AFQV…FGRI), 196 to 216 (PSQL…LWWY), 224 to 244 (MAAS…IEFF), and 258 to 278 (WMTK…IMLI). Arginine 138 provides a ligand contact to a 1,2-diacyl-sn-glycero-3-phospho-(1'-sn-glycerol).

It belongs to the Lgt family.

The protein localises to the cell inner membrane. The enzyme catalyses L-cysteinyl-[prolipoprotein] + a 1,2-diacyl-sn-glycero-3-phospho-(1'-sn-glycerol) = an S-1,2-diacyl-sn-glyceryl-L-cysteinyl-[prolipoprotein] + sn-glycerol 1-phosphate + H(+). Its pathway is protein modification; lipoprotein biosynthesis (diacylglyceryl transfer). Its function is as follows. Catalyzes the transfer of the diacylglyceryl group from phosphatidylglycerol to the sulfhydryl group of the N-terminal cysteine of a prolipoprotein, the first step in the formation of mature lipoproteins. This chain is Phosphatidylglycerol--prolipoprotein diacylglyceryl transferase, found in Psychrobacter arcticus (strain DSM 17307 / VKM B-2377 / 273-4).